Consider the following 366-residue polypeptide: Cyclin-O protein A (366 aa).

Disordered stretches follow at residues 18-55 (AAFS…GIKK) and 80-99 (YETP…PYDS).

It belongs to the cyclin family.

The protein localises to the cytoplasm. In terms of biological role, specifically required for generation of multiciliated cells, possibly by promoting a cell cycle state compatible with centriole amplification and maturation. Acts downstream of mcidas to promote mother centriole amplification and maturation in preparation for apical docking. This chain is Cyclin-O protein A (ccno-a), found in Xenopus laevis (African clawed frog).